Consider the following 205-residue polypeptide: Outer-membrane lipoprotein carrier protein (205 aa).

A signal peptide spans 1–22; the sequence is MKKTTLKFAALTLLGLSNLALA.

It belongs to the LolA family. As to quaternary structure, monomer.

It localises to the periplasm. Participates in the translocation of lipoproteins from the inner membrane to the outer membrane. Only forms a complex with a lipoprotein if the residue after the N-terminal Cys is not an aspartate (The Asp acts as a targeting signal to indicate that the lipoprotein should stay in the inner membrane). The sequence is that of Outer-membrane lipoprotein carrier protein from Haemophilus influenzae (strain PittEE).